The following is a 946-amino-acid chain: Multiple C2 and transmembrane domain-containing protein 1 (946 aa).

2 disordered regions span residues 28–193 (QLGV…QKSS) and 205–229 (LEPA…KGEE). The segment covering 31–43 (VGKGKGGGGGRAG) has biased composition (gly residues). A compositionally biased stretch (polar residues) spans 87 to 96 (FSSSQPNLCC). Positions 143–163 (PGGRSPDSAPSSSASSSLSSS) are enriched in low complexity. A compositionally biased stretch (basic and acidic residues) spans 169–187 (RGDRIRDEGTRRGSPEAHL). 3 C2 domains span residues 235 to 353 (KINP…DVTL), 399 to 516 (QTQS…KLEL), and 550 to 671 (HKER…AYVL). Ca(2+) is bound by residues aspartate 270, aspartate 276, aspartate 323, aspartate 325, aspartate 331, aspartate 433, aspartate 439, aspartate 486, aspartate 488, aspartate 494, aspartate 589, aspartate 595, aspartate 641, aspartate 643, and aspartate 649. 2 helical membrane passes run 758–778 (FVLF…LLLL) and 861–881 (PFLS…LYFI).

Belongs to the MCTP family. Ca(2+) is required as a cofactor. As to expression, expressed in the brain and central nervous system (at protein level). Isoform 1 and isoform 2 are expressed in the brain, kidney, liver, heart, lung, skeletal muscle, testis and spleen. Isoform 2 shows a higher expression in the brain, heart and skeletal muscle.

Its subcellular location is the cytoplasmic vesicle. The protein localises to the secretory vesicle. It is found in the synaptic vesicle membrane. The protein resides in the recycling endosome. It localises to the endoplasmic reticulum membrane. Calcium sensor which is essential for the stabilization of normal baseline neurotransmitter release and for the induction and long-term maintenance of presynaptic homeostatic plasticity. Overexpression in cultured neurons significantly inhibits neuronal transferrin endocytosis, secretory vesicle retrieval, cell migration, and oxidative stress from glutamate toxicity. The sequence is that of Multiple C2 and transmembrane domain-containing protein 1 from Rattus norvegicus (Rat).